A 184-amino-acid chain; its full sequence is Large ribosomal subunit protein uL6 (184 aa).

This sequence belongs to the universal ribosomal protein uL6 family. Part of the 50S ribosomal subunit.

Its function is as follows. This protein binds to the 23S rRNA, and is important in its secondary structure. It is located near the subunit interface in the base of the L7/L12 stalk, and near the tRNA binding site of the peptidyltransferase center. The protein is Large ribosomal subunit protein uL6 of Pyrococcus furiosus (strain ATCC 43587 / DSM 3638 / JCM 8422 / Vc1).